The chain runs to 88 residues: Protein Aeq5-like1 (88 aa).

Positions Met-1–Ala-20 are cleaved as a signal peptide. Cystine bridges form between Cys-29/Cys-68, Cys-33/Cys-64, Cys-40/Cys-56, and Cys-47/Cys-53.

Is expressed in the ectodermal cells of gastrulae and planulae. Is also noticeable in the endoderm in late planulae. In the primary polyps, is expressed in both ectoderm (sensory neurons) and endoderm (ganglions). Is not expressed in nematocytes.

Its function is as follows. Probable neuropeptide. This is Protein Aeq5-like1 from Nematostella vectensis (Starlet sea anemone).